Consider the following 90-residue polypeptide: Neuropeptide F (90 aa).

Residues 1–27 (MTFSTSSSFSRRALVALLVCTLLIDLS) form the signal peptide. Positions 54-90 (KHAQHARPRFGKRSYLNPAGYGQDEQEDDWQDSTFTR) are disordered. Basic residues predominate over residues 56-65 (AQHARPRFGK). The residue at position 63 (Phe-63) is a Phenylalanine amide. Residues 67-90 (SYLNPAGYGQDEQEDDWQDSTFTR) constitute a propeptide that is removed on maturation.

The protein belongs to the NPY family. Expressed in hemolymph, brain and midgut.

It is found in the secreted. Its function is as follows. An integral part of the sensory system that mediates food signaling, providing the neural basis for the regulation of food response; coordinates larval foraging and social behavior changes during development. May have a hormonal role in females. This Aedes aegypti (Yellowfever mosquito) protein is Neuropeptide F (npf).